Consider the following 79-residue polypeptide: Dicentracin (79 aa).

Positions 1–22 are cleaved as a signal peptide; that stretch reads MKCATLFLVLSMVVLMAEPGDA. A Glycine amide modification is found at Gly-44. Residues 47-79 constitute a propeptide that is removed on maturation; it reads AQQDQQDQQYQQDQQDQQAEQYQRFNRERAAFD. Residues 48–67 are disordered; the sequence is QQDQQDQQYQQDQQDQQAEQ.

It belongs to the pleurocidin family.

Its subcellular location is the secreted. The protein is Dicentracin of Dicentrarchus labrax (European seabass).